A 315-amino-acid chain; its full sequence is Aspartate carbamoyltransferase catalytic subunit (315 aa).

2 residues coordinate carbamoyl phosphate: arginine 64 and threonine 65. Lysine 92 contacts L-aspartate. Residues arginine 114, histidine 142, and glutamine 145 each contribute to the carbamoyl phosphate site. The L-aspartate site is built by arginine 175 and arginine 229. 2 residues coordinate carbamoyl phosphate: glycine 270 and proline 271.

The protein belongs to the aspartate/ornithine carbamoyltransferase superfamily. ATCase family. Heterododecamer (2C3:3R2) of six catalytic PyrB chains organized as two trimers (C3), and six regulatory PyrI chains organized as three dimers (R2).

It catalyses the reaction carbamoyl phosphate + L-aspartate = N-carbamoyl-L-aspartate + phosphate + H(+). The protein operates within pyrimidine metabolism; UMP biosynthesis via de novo pathway; (S)-dihydroorotate from bicarbonate: step 2/3. Catalyzes the condensation of carbamoyl phosphate and aspartate to form carbamoyl aspartate and inorganic phosphate, the committed step in the de novo pyrimidine nucleotide biosynthesis pathway. The sequence is that of Aspartate carbamoyltransferase catalytic subunit from Methylorubrum populi (strain ATCC BAA-705 / NCIMB 13946 / BJ001) (Methylobacterium populi).